The sequence spans 162 residues: Glutathione peroxidase-like peroxiredoxin GPX5 (162 aa).

The residue at position 38 (Cys38) is an S-selanylcysteine. Asn87 is a catalytic residue.

It belongs to the glutathione peroxidase family. In terms of processing, cys-87 is S-selanylated when selenium levels are high. S-selanylation may increase or be important for glutathione peroxidase activity.

It localises to the cytoplasm. The catalysed reaction is 2 glutathione + H2O2 = glutathione disulfide + 2 H2O. The enzyme catalyses a hydroperoxide + [thioredoxin]-dithiol = an alcohol + [thioredoxin]-disulfide + H2O. Functionally, has thioredoxin peroxidase activity. May also have glutathione peroxidase activity, although this activity is controversial. Protects cells against reactive oxygen species, which may include photooxidative stress, hydrogen peroxide and organic hydroperoxides. The polypeptide is Glutathione peroxidase-like peroxiredoxin GPX5 (Chlamydomonas reinhardtii (Chlamydomonas smithii)).